The sequence spans 463 residues: Thiamine-repressible acid phosphatase pho4 (463 aa).

A signal peptide spans 1–18 (MKLSGISLWLLAASIVHA). Histidine 69 functions as the Nucleophile in the catalytic mechanism. N-linked (GlcNAc...) asparagine glycosylation is found at asparagine 98, asparagine 104, asparagine 186, asparagine 221, asparagine 251, and asparagine 328. The active-site Proton donor is the aspartate 341. N-linked (GlcNAc...) asparagine glycans are attached at residues asparagine 433, asparagine 439, and asparagine 458.

Belongs to the histidine acid phosphatase family.

It is found in the secreted. It localises to the cell wall. The catalysed reaction is a phosphate monoester + H2O = an alcohol + phosphate. Functionally, may dephosphorylate thiamine phosphates. The protein is Thiamine-repressible acid phosphatase pho4 (pho4) of Schizosaccharomyces pombe (strain 972 / ATCC 24843) (Fission yeast).